The following is a 485-amino-acid chain: Packaging protein UL32 (485 aa).

Positions 73, 76, 149, 155, 287, 290, 384, and 391 each coordinate Zn(2+). Zinc finger regions lie at residues Cys73–Cys155 and Cys287–Cys391.

The protein belongs to the herpesviridae UL32 protein family.

The protein resides in the host cytoplasm. Its subcellular location is the host nucleus. Plays a role in efficient localization of neo-synthesized capsids to nuclear replication compartments, thereby controlling cleavage and packaging of virus genomic DNA. The chain is Packaging protein UL32 (U36) from Human herpesvirus 7 (strain JI) (HHV-7).